The following is a 239-amino-acid chain: Ribosomal RNA small subunit methyltransferase G (239 aa).

S-adenosyl-L-methionine-binding positions include glycine 78, phenylalanine 83, alanine 129–glutamate 130, and arginine 148.

It belongs to the methyltransferase superfamily. RNA methyltransferase RsmG family.

It is found in the cytoplasm. Specifically methylates the N7 position of a guanine in 16S rRNA. This is Ribosomal RNA small subunit methyltransferase G from Desulfitobacterium hafniense (strain Y51).